Here is a 457-residue protein sequence, read N- to C-terminus: Biphenyl dioxygenase subunit alpha (457 aa).

The Rieske domain maps to 58 to 174 (WLMLGHETHI…VETYKGLVFA (117 aa)). 4 residues coordinate [2Fe-2S] cluster: Cys-100, His-102, Cys-120, and His-123. Residues His-233 and His-239 each contribute to the Fe cation site.

This sequence belongs to the bacterial ring-hydroxylating dioxygenase alpha subunit family. As to quaternary structure, heterohexamer consisting of three BphA subunits and three BphE subunits. A ferredoxin (BphF) and a ferredoxin reductase (BphG) must be present to obtain activity. [2Fe-2S] cluster serves as cofactor. The cofactor is Fe cation.

It carries out the reaction biphenyl + NADH + O2 + H(+) = (2R,3S)-3-phenylcyclohexa-3,5-diene-1,2-diol + NAD(+). Its pathway is xenobiotic degradation; biphenyl degradation; 2-hydroxy-2,4-pentadienoate and benzoate from biphenyl: step 1/4. The polypeptide is Biphenyl dioxygenase subunit alpha (bphA) (Comamonas testosteroni (Pseudomonas testosteroni)).